Consider the following 347-residue polypeptide: MRIEEDLKLGFKDVLIRPKRSTLKSRSDVELERQFTFKHSGQTWSGVPIIAANMDTVGTFEMAQALAGFDILTAVHKHYTVEEWAAFINTASADVLKHVMVSTGTSDADFEKTVQILALNPALNFVCIDVANGYSEHFVQFVAKAREAWPTKTICAGNVVTGEMCEELILSGADIVKVGIGPGSVCTTRVKTGVGYPQLSAVIECADAAHGLGGMIVSDGGCTMPGDVAKAFGGGADFVMLGGMLAGHEESGGSVVEENGEKFMLFYGMSSESAMNRHVGGVAKYRAAEGKTVKLPLRGPVGNTARDILGGLRSACTYVGASRLKELTKRTTFIRVQEQENRIFNSL.

Position 108-131 (108-131) interacts with NADP(+); the sequence is ADFEKTVQILALNPALNFVCIDVA. 2 residues coordinate K(+): Gly-181 and Gly-183. Catalysis depends on Cys-186, which acts as the Thioimidate intermediate. Residue 216-239 participates in NADP(+) binding; the sequence is IVSDGGCTMPGDVAKAFGGGADFV.

It belongs to the IMPDH/GMPR family. GuaC type 1 subfamily. Homotetramer.

The enzyme catalyses IMP + NH4(+) + NADP(+) = GMP + NADPH + 2 H(+). Its function is as follows. Catalyzes the irreversible NADPH-dependent deamination of GMP to IMP. It functions in the conversion of nucleobase, nucleoside and nucleotide derivatives of G to A nucleotides, and in maintaining the intracellular balance of A and G nucleotides. This chain is GMP reductase, found in Salmonella paratyphi A (strain ATCC 9150 / SARB42).